A 57-amino-acid chain; its full sequence is uncharacterized protein (57 aa).

An N-terminal signal peptide occupies residues 1–24 (MYDTWFVLTAVVLFVLVLIGNVHG).

Prismatic layer of shell (at protein level).

The protein localises to the secreted. This is an uncharacterized protein from Margaritifera margaritifera (Freshwater pearl mussel).